A 450-amino-acid chain; its full sequence is Putative receptor-like protein kinase At1g72540 (450 aa).

Residue Thr-73 is modified to Phosphothreonine. Residues Phe-84–Leu-365 form the Protein kinase domain. ATP contacts are provided by residues Leu-90 to Val-98 and Lys-119. Tyr-164 carries the post-translational modification Phosphotyrosine. The active-site Proton acceptor is the Asp-214. At Ser-218 the chain carries Phosphoserine. Position 254 is a phosphothreonine (Thr-254). Tyr-262 bears the Phosphotyrosine mark.

It belongs to the protein kinase superfamily. Ser/Thr protein kinase family.

The catalysed reaction is L-seryl-[protein] + ATP = O-phospho-L-seryl-[protein] + ADP + H(+). It catalyses the reaction L-threonyl-[protein] + ATP = O-phospho-L-threonyl-[protein] + ADP + H(+). The polypeptide is Putative receptor-like protein kinase At1g72540 (Arabidopsis thaliana (Mouse-ear cress)).